Here is a 281-residue protein sequence, read N- to C-terminus: Dexamethasone-induced Ras-related protein 1 (281 aa).

Cys-11 carries the S-nitrosocysteine modification. Residue 31 to 38 (GSSKVGKT) coordinates GTP. The Effector region signature appears at 53-61 (YTPTIEDFH). GTP contacts are provided by residues 78–82 (DTSGN) and 145–148 (NKGD). The residue at position 278 (Cys-278) is a Cysteine methyl ester. Cys-278 is lipidated: S-farnesyl cysteine. Residues 279 to 281 (VIS) constitute a propeptide, removed in mature form.

Belongs to the small GTPase superfamily. RasD family. Forms a ternary complex with CAPON and NOS1. Component of a complex, at least composed of APBB1, RASD1/DEXRAS1 and APP. Interacts with APBB1/FE65. S-nitrosylation stimulates guanine-nucleotide exchange activity. In terms of tissue distribution, expressed in a variety of tissues including heart, cardiovascular tissues, brain, placenta, lung, liver, skeletal muscle, kidney, pancreas, gastrointestinal and reproductive tissues.

Its subcellular location is the cell membrane. It is found in the cytoplasm. The protein resides in the perinuclear region. The protein localises to the nucleus. Its function is as follows. Small GTPase. Negatively regulates the transcription regulation activity of the APBB1/FE65-APP complex via its interaction with APBB1/FE65. This Homo sapiens (Human) protein is Dexamethasone-induced Ras-related protein 1 (RASD1).